The following is a 352-amino-acid chain: Putative pectinesterase 11 (352 aa).

Residues 13–35 (ANYHHIIIINIFILSSITSSSMA) form a helical membrane-spanning segment. Asn-76 carries N-linked (GlcNAc...) asparagine glycosylation. Asp-175 functions as the Proton donor in the catalytic mechanism. Asp-196 functions as the Nucleophile in the catalytic mechanism. Asn-218 carries N-linked (GlcNAc...) asparagine glycosylation. 2 residues coordinate substrate: Arg-252 and Trp-254. The segment at 332–352 (LRPAPSHFKNAPKQTQNKEIN) is disordered. Residues 343–352 (PKQTQNKEIN) are compositionally biased toward polar residues.

The protein belongs to the pectinesterase family.

It is found in the membrane. It carries out the reaction [(1-&gt;4)-alpha-D-galacturonosyl methyl ester](n) + n H2O = [(1-&gt;4)-alpha-D-galacturonosyl](n) + n methanol + n H(+). It participates in glycan metabolism; pectin degradation; 2-dehydro-3-deoxy-D-gluconate from pectin: step 1/5. In terms of biological role, acts in the modification of cell walls via demethylesterification of cell wall pectin. This Arabidopsis thaliana (Mouse-ear cress) protein is Putative pectinesterase 11 (PME11).